The primary structure comprises 1494 residues: Ral GTPase-activating protein subunit beta (1494 aa).

2 disordered regions span residues 355-437 (PRSD…APRR) and 709-738 (ENNL…PDSE). At S359 the chain carries Phosphoserine. 2 positions are modified to phosphothreonine: T363 and T379. Composition is skewed to polar residues over residues 369 to 381 (SMPQ…TTPP), 392 to 428 (NKAT…TSSE), and 711 to 735 (NLKS…PTTP). Phosphoserine is present on residues S421 and S720. The residue at position 734 (T734) is a Phosphothreonine. The 244-residue stretch at 1149-1392 (IGYLDLLPCR…TTLEKEVPVI (244 aa)) folds into the Rap-GAP domain. Phosphoserine is present on S1285. Residues 1312–1323 (NLNSSQRLSPSS) show a composition bias toward polar residues. The interval 1312–1335 (NLNSSQRLSPSSRMRKLPQGRPVP) is disordered.

Component of the heterodimeric RalGAP1 complex with RALGAPA1 and of the heterodimeric RalGAP2 complex with RALGAPA2. Heterodimerization is required for activity. As to expression, highly expressed in brain, mostly in amygdala.

Its function is as follows. Non-catalytic subunit of the heterodimeric RalGAP1 and RalGAP2 complexes which act as GTPase activators for the Ras-like small GTPases RALA and RALB. The polypeptide is Ral GTPase-activating protein subunit beta (RALGAPB) (Homo sapiens (Human)).